We begin with the raw amino-acid sequence, 467 residues long: Cysteine--tRNA ligase (467 aa).

Residue cysteine 30 coordinates Zn(2+). Residues 32–42 carry the 'HIGH' region motif; it reads PTVYNYIHIGN. Residues cysteine 210, histidine 235, and glutamate 239 each contribute to the Zn(2+) site. The 'KMSKS' region signature appears at 267–271; that stretch reads KMSKS. Position 270 (lysine 270) interacts with ATP. The residue at position 271 (serine 271) is a Phosphoserine.

Belongs to the class-I aminoacyl-tRNA synthetase family. As to quaternary structure, monomer. Requires Zn(2+) as cofactor.

The protein resides in the cytoplasm. The enzyme catalyses tRNA(Cys) + L-cysteine + ATP = L-cysteinyl-tRNA(Cys) + AMP + diphosphate. The sequence is that of Cysteine--tRNA ligase from Geobacillus thermodenitrificans (strain NG80-2).